Here is a 308-residue protein sequence, read N- to C-terminus: Thiohydrolase (308 aa).

Belongs to the polyketide transferase af380 family.

It participates in mycotoxin biosynthesis. Its function is as follows. Thiohydrolase; part of the gene cluster that mediates the biosynthesis of brefeldin A (BFA), a protein transport inhibitor that shows antiviral, antifungal, and antitumor properties. The proposed biosynthesis of BFA involves formation of an acyclic polyketide chain that is differentially tailored throughout the backbone. The highly reducing polyketide synthase Bref-PKS is proposed to synthesize the precisely reduced octaketide precursor, which could then be directly offloaded by the thiohydrolase enzyme Bref-TH followed by a cytochrome P450 monooxygenase-mediated formation of the cyclopentane ring and macrocyclization to afford 7-deoxy BFA. Alternatively, the first ring annulation can also occur on the ACP-tethered intermediate before the thiohydrolase release and lactonization. The C7-hydroxylation by another cytochrome P450 monooxygenase is believed to be the final step in the process to obtain the final structure of BFA. In addition to the HRPKS Bref-PKS and the thiohydrolase Bref-TH, the brefeldin A biosynthesis cluster contains 4 cytochrome p450 monooxygenases (called orf3 to orf6), as well a the probable cluster-specific transcription regulator orf8. This chain is Thiohydrolase, found in Eupenicillium brefeldianum (Penicillium brefeldianum).